Reading from the N-terminus, the 359-residue chain is Elongation factor Ts 1, mitochondrial (359 aa).

A compositionally biased stretch (low complexity) spans 323–341; the sequence is GKAAPAPKAEEPAAVAPAK. The segment at 323–345 is disordered; it reads GKAAPAPKAEEPAAVAPAKADAE.

It belongs to the EF-Ts family.

Its subcellular location is the mitochondrion. Associates with the EF-Tu.GDP complex and induces the exchange of GDP to GTP. It remains bound to the aminoacyl-tRNA.EF-Tu.GTP complex up to the GTP hydrolysis stage on the ribosome. In Thalassiosira pseudonana (Marine diatom), this protein is Elongation factor Ts 1, mitochondrial.